We begin with the raw amino-acid sequence, 137 residues long: Large ribosomal subunit protein uL16 (137 aa).

It belongs to the universal ribosomal protein uL16 family. As to quaternary structure, part of the 50S ribosomal subunit.

In terms of biological role, binds 23S rRNA and is also seen to make contacts with the A and possibly P site tRNAs. This chain is Large ribosomal subunit protein uL16, found in Ruegeria sp. (strain TM1040) (Silicibacter sp.).